Reading from the N-terminus, the 196-residue chain is Probable peptidyl-prolyl cis-trans isomerase (196 aa).

The signal sequence occupies residues M1 to A26. The PPIase cyclophilin-type domain occupies P29 to D194.

This sequence belongs to the cyclophilin-type PPIase family.

It is found in the periplasm. The catalysed reaction is [protein]-peptidylproline (omega=180) = [protein]-peptidylproline (omega=0). Its function is as follows. PPIases accelerate the folding of proteins. It catalyzes the cis-trans isomerization of proline imidic peptide bonds in oligopeptides. The chain is Probable peptidyl-prolyl cis-trans isomerase (ppi) from Brucella melitensis biotype 1 (strain ATCC 23456 / CCUG 17765 / NCTC 10094 / 16M).